A 223-amino-acid polypeptide reads, in one-letter code: Cytidine deaminase 3 (223 aa).

2 consecutive CMP/dCMP-type deaminase domains span residues 21 to 154 and 184 to 223; these read TEPM…FSPD and SDCS…WYRG. Residue 62–64 participates in substrate binding; it reads NVE. His-75 lines the Zn(2+) pocket. Glu-77 acts as the Proton donor in catalysis. Residues Cys-110 and Cys-113 each contribute to the Zn(2+) site.

Belongs to the cytidine and deoxycytidylate deaminase family. As to quaternary structure, homodimer. The cofactor is Zn(2+).

It carries out the reaction cytidine + H2O + H(+) = uridine + NH4(+). The catalysed reaction is 2'-deoxycytidine + H2O + H(+) = 2'-deoxyuridine + NH4(+). In terms of biological role, this enzyme scavenges exogenous and endogenous cytidine and 2'-deoxycytidine for UMP synthesis. In Arabidopsis thaliana (Mouse-ear cress), this protein is Cytidine deaminase 3 (CDA3).